Reading from the N-terminus, the 133-residue chain is UPF0102 protein CYA_0680 (133 aa).

This sequence belongs to the UPF0102 family.

In Synechococcus sp. (strain JA-3-3Ab) (Cyanobacteria bacterium Yellowstone A-Prime), this protein is UPF0102 protein CYA_0680.